The primary structure comprises 949 residues: General transcription factor II-I repeat domain-containing protein 2B (949 aa).

GTF2I-like repeat units lie at residues 98–192 (QVHS…QLGG) and 323–417 (LSSI…SNVG).

It belongs to the TFII-I family. In terms of tissue distribution, ubiquitous.

The protein localises to the nucleus. The sequence is that of General transcription factor II-I repeat domain-containing protein 2B (GTF2IRD2B) from Homo sapiens (Human).